The primary structure comprises 76 residues: Heat shock factor-binding protein 1 (76 aa).

Belongs to the HSBP1 family. As to quaternary structure, homohexamer. Associates with heptad repeats of HSF1 trimers and probably also HSF1 monomers, and with HSP70. Association with HSF1 trimers and HSP70 coincides with attenuation of heat shock response and the conversion of HSF1 trimer to monomer.

Its subcellular location is the nucleus. Functionally, negative regulator of the heat shock response. Negatively affects HSF1 DNA-binding activity. May have a role in the suppression of the activation of the stress response during the aging process. The polypeptide is Heat shock factor-binding protein 1 (HSBP1) (Pongo abelii (Sumatran orangutan)).